Reading from the N-terminus, the 24-residue chain is M-poneritoxin-Ng2b (24 aa).

The residue at position 24 (L24) is a Leucine amide.

As to expression, expressed by the venom gland.

The protein resides in the secreted. Functionally, has a broad spectrum of activity against both Gram-positive and Gram-negative bacteria. Is inactive against yeast, erythrocytes, and insects. The chain is M-poneritoxin-Ng2b from Neoponera goeldii (Ponerine ant).